Consider the following 119-residue polypeptide: Toxin ICK-9 (119 aa).

The signal sequence occupies residues 1–19 (MMKLYSLVIIATLAAAAFA). 4 disulfides stabilise this stretch: Cys59–Cys74, Cys67–Cys80, Cys71–Cys116, and Cys73–Cys87.

It belongs to the neurotoxin 25 family. ICK-8 subfamily. Expressed by the venom gland.

The protein resides in the secreted. Ion channel inhibitor. The protein is Toxin ICK-9 of Trittame loki (Brush-footed trapdoor spider).